The chain runs to 362 residues: Peptide chain release factor 1 (362 aa).

Position 237 is an N5-methylglutamine (glutamine 237).

The protein belongs to the prokaryotic/mitochondrial release factor family. Methylated by PrmC. Methylation increases the termination efficiency of RF1.

It is found in the cytoplasm. In terms of biological role, peptide chain release factor 1 directs the termination of translation in response to the peptide chain termination codons UAG and UAA. The protein is Peptide chain release factor 1 of Legionella pneumophila (strain Paris).